Reading from the N-terminus, the 113-residue chain is Large ribosomal subunit protein bL19 (113 aa).

It belongs to the bacterial ribosomal protein bL19 family.

Its function is as follows. This protein is located at the 30S-50S ribosomal subunit interface and may play a role in the structure and function of the aminoacyl-tRNA binding site. The sequence is that of Large ribosomal subunit protein bL19 from Mycobacterium sp. (strain JLS).